Reading from the N-terminus, the 250-residue chain is Green-light absorbing proteorhodopsin (250 aa).

The first 18 residues, 1–18 (MGKLLLILGSVIALPTFA), serve as a signal peptide directing secretion. Over 19 to 29 (AGGGDLDASDY) the chain is Extracellular. The helical transmembrane segment at 30–53 (TGVSFWLVTAALLASTVFFFVERD) threads the bilayer. Residues 54 to 58 (RVSAK) are Cytoplasmic-facing. Residues 59-87 (WKTSLTVSGLVTGIAFWHYMYMRGVWIET) traverse the membrane as a helical segment. Topologically, residues 88-90 (GDS) are extracellular. A helical membrane pass occupies residues 91–118 (PTVFRYIDWLLTVPLLICEFYLILAAAT). Over 119–121 (NVA) the chain is Cytoplasmic. Residues 122-144 (GSLFKKLLVGSLVMLVFGYMGEA) form a helical membrane-spanning segment. The Extracellular portion of the chain corresponds to 145–147 (GIM). Residues 148-177 (AAWPAFIIGCLAWVYMIYELWAGEGKSACN) form a helical membrane-spanning segment. The Cytoplasmic segment spans residues 178 to 180 (TAS). Residues 181-208 (PAVQSAYNTMMYIIIFGWAIYPVGYFTG) form a helical membrane-spanning segment. The Extracellular portion of the chain corresponds to 209–218 (YLMGDGGSAL). Residues 219 to 249 (NLNLIYNLADFVNKILFGLIIWNVAVKESSN) traverse the membrane as a helical segment. Position 232 is an N6-(retinylidene)lysine (K232). Position 250 (A250) is a topological domain, cytoplasmic.

It belongs to the archaeal/bacterial/fungal opsin family. As to quaternary structure, homopentamer. GPR protomers assemble into a pentamer around a central pore with a C5 symmetry axis. Post-translationally, contains one covalently linked retinal chromophore per subunit.

The protein localises to the cell membrane. Light-driven proton pump. This Unknown prokaryotic organism protein is Green-light absorbing proteorhodopsin.